An 887-amino-acid polypeptide reads, in one-letter code: Replication origin-binding protein (887 aa).

Residues 1 to 28 (MPSIGPIPTIPDEGSRGSSATAAPRRAM) form a disordered region. A Helicase ATP-binding domain is found at 93–258 (PNNPSSRRVT…ASARGERSVH (166 aa)). 106-113 (APMGSGKT) lines the ATP pocket.

This sequence belongs to the herpesviridae OriBP family. Homodimer. Interacts with the major DNA-binding protein. Interacts with the DNA helicase/primase complex-associated protein and the polymerase accessory protein.

The protein resides in the host nucleus. Functionally, functions as a docking protein to recruit essential components of the viral replication machinery to viral DNA origins. In the presence of the major DNA-binding protein, opens dsDNA leading to a conformational change in the origin that facilitates DNA unwinding and subsequent replication. This chain is Replication origin-binding protein, found in Equus caballus (Horse).